We begin with the raw amino-acid sequence, 282 residues long: MSRYQSHSFDDGEINPFANPTSVPAATSKLSPLPPEPYDRGATMDIPLDSGKDLKAKEKELREKEAELKRREQEIKRKEDAIAQAGIVIEEKNWPPFFPLIHHDISNEIPIHLQRIQYVAFTSMLGLVVCLLWNIVAVTTAWIKGEGPTIWFLAIIYFISGVPGAYVMWYRPLYRAMRTDSALKFGWFFFTYLFHIAFCVFAAVAPPIIFKGKSLTGILPAIDVLSGNILVGIFYFIGFGFFCLESLVSIWVIQQVYMYFRGSGKAAEMKQEATRRAMMAAL.

The tract at residues 1–49 (MSRYQSHSFDDGEINPFANPTSVPAATSKLSPLPPEPYDRGATMDIPLD) is disordered. Over 1 to 117 (MSRYQSHSFD…EIPIHLQRIQ (117 aa)) the chain is Cytoplasmic. A compositionally biased stretch (polar residues) spans 18–30 (ANPTSVPAATSKL). Ser-31 carries the post-translational modification Phosphoserine. Positions 48–93 (LDSGKDLKAKEKELREKEAELKRREQEIKRKEDAIAQAGIVIEEKN) form a coiled coil. A run of 4 helical transmembrane segments spans residues 118–138 (YVAF…IVAV), 150–170 (IWFL…VMWY), 185–205 (FGWF…AAVA), and 233–253 (IFYF…IWVI). The Cytoplasmic segment spans residues 254–282 (QQVYMYFRGSGKAAEMKQEATRRAMMAAL).

The protein belongs to the SCAMP family.

The protein localises to the cell membrane. It is found in the cytoplasmic vesicle. The protein resides in the secretory vesicle membrane. Probably involved in membrane trafficking. The polypeptide is Secretory carrier-associated membrane protein 1 (SCAMP1) (Arabidopsis thaliana (Mouse-ear cress)).